Here is a 536-residue protein sequence, read N- to C-terminus: Cytochrome P450 monooxygenase pbrC (536 aa).

Residues 20–39 (VMLPALVGFAFLIYQAFFAI) traverse the membrane as a helical segment. A heme-binding site is contributed by Cys479.

The protein belongs to the cytochrome P450 family. Heme is required as a cofactor.

Its subcellular location is the membrane. It participates in secondary metabolite biosynthesis; terpenoid biosynthesis. Cytochrome P450 monooxygenase; part of the gene cluster that mediates the biosynthesis of the sesquiterpenoid aspterric acid (AA), an inhibitor of dihydroxy-acid dehydratase (DHAD) effective as an herbicide. PbrC catalyzes the third and last step within the pathway and converts the alpha-epoxy carboxylate intermediate produced by the cytochrome P450 monooxygenase pbrB from (-)daucane into the tricyclic aspterric acid. The chain is Cytochrome P450 monooxygenase pbrC from Penicillium brasilianum.